The primary structure comprises 88 residues: Small cysteine and glycine repeat-containing protein 1 (88 aa).

A 10 X 2 AA repeats of CG region spans residues 4–72 (CGCGGCGGCG…TCSSCGYSCG (69 aa)).

Belongs to the KRTAP type 28 family.

Its function is as follows. In the hair cortex, hair keratin intermediate filaments are embedded in an interfilamentous matrix, consisting of hair keratin-associated proteins (KRTAP), which are essential for the formation of a rigid and resistant hair shaft through their extensive disulfide bond cross-linking with abundant cysteine residues of hair keratins. The matrix proteins include the high-sulfur and high-glycine-tyrosine keratins. This is Small cysteine and glycine repeat-containing protein 1 from Homo sapiens (Human).